A 1531-amino-acid polypeptide reads, in one-letter code: Protein turtle (1531 aa).

The Extracellular portion of the chain corresponds to M1–T858. Positions Q19 to K44 are disordered. Ig-like C2-type domains follow at residues P132–T243, P253–I340, G344–S436, P440–D529, and P536–T624. 5 disulfide bridges follow: C150-C227, C275-C324, C366-C419, C462-C513, and C558-C611. Fibronectin type-III domains follow at residues Q632–D728 and P760–R851. Residues A859–V879 form a helical membrane-spanning segment. Residues K880–C1531 are Cytoplasmic-facing. 2 disordered regions span residues E1248–Q1269 and N1318–R1395. Positions S1333–S1349 are enriched in low complexity. Residues Q1380–G1389 are compositionally biased toward polar residues.

This sequence belongs to the immunoglobulin superfamily. Turtle family. As to quaternary structure, interacts with bdl. As to expression, exclusively expressed in the central nervous system.

It is found in the membrane. Its function is as follows. Essential protein that plays a role in the establishment of coordinated motor control. In the developing eye, involved in axonal targeting of the R7 photoreceptor. This Drosophila melanogaster (Fruit fly) protein is Protein turtle (tutl).